The chain runs to 456 residues: Bifunctional protein GlmU (456 aa).

The segment at 1-229 (MLNNAMSVVI…LSEVEGVNNR (229 aa)) is pyrophosphorylase. UDP-N-acetyl-alpha-D-glucosamine contacts are provided by residues 11–14 (LAAG), lysine 25, glutamine 76, 81–82 (GT), 103–105 (YGD), glycine 140, glutamate 154, asparagine 169, and asparagine 227. Position 105 (aspartate 105) interacts with Mg(2+). Residue asparagine 227 coordinates Mg(2+). A linker region spans residues 230-250 (LQLSRLERVYQSEQAEKLLLA). An N-acetyltransferase region spans residues 251 to 456 (GVMLRDPARF…EGWRRPVKKK (206 aa)). Arginine 333 and lysine 351 together coordinate UDP-N-acetyl-alpha-D-glucosamine. Histidine 363 functions as the Proton acceptor in the catalytic mechanism. UDP-N-acetyl-alpha-D-glucosamine contacts are provided by tyrosine 366 and asparagine 377. Acetyl-CoA contacts are provided by residues alanine 380, 386–387 (NY), serine 405, alanine 423, and arginine 440.

This sequence in the N-terminal section; belongs to the N-acetylglucosamine-1-phosphate uridyltransferase family. In the C-terminal section; belongs to the transferase hexapeptide repeat family. As to quaternary structure, homotrimer. Mg(2+) serves as cofactor.

The protein resides in the cytoplasm. It catalyses the reaction alpha-D-glucosamine 1-phosphate + acetyl-CoA = N-acetyl-alpha-D-glucosamine 1-phosphate + CoA + H(+). The enzyme catalyses N-acetyl-alpha-D-glucosamine 1-phosphate + UTP + H(+) = UDP-N-acetyl-alpha-D-glucosamine + diphosphate. It participates in nucleotide-sugar biosynthesis; UDP-N-acetyl-alpha-D-glucosamine biosynthesis; N-acetyl-alpha-D-glucosamine 1-phosphate from alpha-D-glucosamine 6-phosphate (route II): step 2/2. The protein operates within nucleotide-sugar biosynthesis; UDP-N-acetyl-alpha-D-glucosamine biosynthesis; UDP-N-acetyl-alpha-D-glucosamine from N-acetyl-alpha-D-glucosamine 1-phosphate: step 1/1. It functions in the pathway bacterial outer membrane biogenesis; LPS lipid A biosynthesis. Functionally, catalyzes the last two sequential reactions in the de novo biosynthetic pathway for UDP-N-acetylglucosamine (UDP-GlcNAc). The C-terminal domain catalyzes the transfer of acetyl group from acetyl coenzyme A to glucosamine-1-phosphate (GlcN-1-P) to produce N-acetylglucosamine-1-phosphate (GlcNAc-1-P), which is converted into UDP-GlcNAc by the transfer of uridine 5-monophosphate (from uridine 5-triphosphate), a reaction catalyzed by the N-terminal domain. The polypeptide is Bifunctional protein GlmU (Escherichia coli O6:K15:H31 (strain 536 / UPEC)).